Consider the following 172-residue polypeptide: S-ribosylhomocysteine lyase (172 aa).

Positions 54, 58, and 128 each coordinate Fe cation.

Belongs to the LuxS family. Homodimer. Fe cation serves as cofactor.

It carries out the reaction S-(5-deoxy-D-ribos-5-yl)-L-homocysteine = (S)-4,5-dihydroxypentane-2,3-dione + L-homocysteine. Involved in the synthesis of autoinducer 2 (AI-2) which is secreted by bacteria and is used to communicate both the cell density and the metabolic potential of the environment. The regulation of gene expression in response to changes in cell density is called quorum sensing. Catalyzes the transformation of S-ribosylhomocysteine (RHC) to homocysteine (HC) and 4,5-dihydroxy-2,3-pentadione (DPD). In Aliivibrio salmonicida (strain LFI1238) (Vibrio salmonicida (strain LFI1238)), this protein is S-ribosylhomocysteine lyase.